A 633-amino-acid chain; its full sequence is Pescadillo homolog (633 aa).

In terms of domain architecture, BRCT spans 321-414 (RLRTLFKGLK…QLLPTNKYFL (94 aa)). 2 disordered regions span residues 450–470 (HAQSEDESEDDAAAEEEDTVE) and 490–567 (KKYG…LQAR). S453 and S457 each carry phosphoserine. 2 stretches are compositionally biased toward acidic residues: residues 454–470 (EDESEDDAAAEEEDTVE) and 498–526 (VNEDEEDSDEEDFDGEEQESDDDDEEELD). Basic and acidic residues predominate over residues 527-538 (EKEKRLLEEKQK). Residues 545 to 554 (KVHKVNKRQV) are compositionally biased toward basic residues. The segment covering 555 to 564 (HKAEVDEHRL) has biased composition (basic and acidic residues). Positions 593-626 (LLRKKRRTIETDAKEAKKLAKREARKAAAAAAAA) form a coiled coil.

This sequence belongs to the pescadillo family.

The protein resides in the nucleus. It is found in the nucleolus. It localises to the nucleoplasm. Its function is as follows. Required for maturation of ribosomal RNAs and formation of the large ribosomal subunit. The sequence is that of Pescadillo homolog from Drosophila virilis (Fruit fly).